Here is an 876-residue protein sequence, read N- to C-terminus: Leucine--tRNA ligase (876 aa).

Positions 43-53 (PYPSGRIHMGH) match the 'HIGH' region motif. The short motif at 630–634 (KMSKS) is the 'KMSKS' region element. An ATP-binding site is contributed by lysine 633.

This sequence belongs to the class-I aminoacyl-tRNA synthetase family.

It localises to the cytoplasm. The catalysed reaction is tRNA(Leu) + L-leucine + ATP = L-leucyl-tRNA(Leu) + AMP + diphosphate. This chain is Leucine--tRNA ligase, found in Methylocella silvestris (strain DSM 15510 / CIP 108128 / LMG 27833 / NCIMB 13906 / BL2).